A 570-amino-acid chain; its full sequence is Glycine--tRNA ligase (570 aa).

Substrate is bound by residues Arg-99 and Glu-165. ATP contacts are provided by residues 197 to 199, 207 to 212, 324 to 325, and 443 to 446; these read RNE, LRLREF, EC, and GIDR. 212-216 serves as a coordination point for substrate; that stretch reads FSQAE. A substrate-binding site is contributed by 439 to 443; the sequence is EPSFG.

This sequence belongs to the class-II aminoacyl-tRNA synthetase family.

It localises to the cytoplasm. The catalysed reaction is tRNA(Gly) + glycine + ATP = glycyl-tRNA(Gly) + AMP + diphosphate. Functionally, catalyzes the attachment of glycine to tRNA(Gly). The sequence is that of Glycine--tRNA ligase from Thermococcus sibiricus (strain DSM 12597 / MM 739).